Consider the following 165-residue polypeptide: Small ribosomal subunit protein uS5 (165 aa).

The S5 DRBM domain maps to Q10–V73.

It belongs to the universal ribosomal protein uS5 family. In terms of assembly, part of the 30S ribosomal subunit. Contacts proteins S4 and S8.

Its function is as follows. With S4 and S12 plays an important role in translational accuracy. In terms of biological role, located at the back of the 30S subunit body where it stabilizes the conformation of the head with respect to the body. This is Small ribosomal subunit protein uS5 from Borreliella afzelii (strain PKo) (Borrelia afzelii).